Consider the following 104-residue polypeptide: Large ribosomal subunit protein uL24 (104 aa).

It belongs to the universal ribosomal protein uL24 family. As to quaternary structure, part of the 50S ribosomal subunit.

In terms of biological role, one of two assembly initiator proteins, it binds directly to the 5'-end of the 23S rRNA, where it nucleates assembly of the 50S subunit. One of the proteins that surrounds the polypeptide exit tunnel on the outside of the subunit. This is Large ribosomal subunit protein uL24 from Clostridium beijerinckii (strain ATCC 51743 / NCIMB 8052) (Clostridium acetobutylicum).